Here is a 493-residue protein sequence, read N- to C-terminus: Protein kinase PINOID 2 (493 aa).

The tract at residues 1 to 53 (MAAIKEESDYDSSRSSLTAPDSRRSWISDIGSSSSVSARSFGGDTPASSCRYK) is disordered. Residues 27 to 44 (ISDIGSSSSVSARSFGGD) show a composition bias toward low complexity. A Protein kinase domain is found at 80–443 (FRLVRRLGSG…SAEVKRHPFF (364 aa)). Residues 86 to 94 (LGSGDLGNV) and Lys-120 each bind ATP. Asp-216 acts as the Proton acceptor in catalysis. Residues 295 to 306 (GGGAAAGNNGDG) show a composition bias toward gly residues. 2 disordered regions span residues 295 to 320 (GGGA…TAEP) and 458 to 493 (EVPA…FDYF). Acidic residues predominate over residues 307-319 (DGNDEEAETETAE). In terms of domain architecture, AGC-kinase C-terminal spans 444–493 (KGVNWALVRSVRPPEVPAPPAPAPKKVMTMSKKERQEPYNYRPENHFDYF). Over residues 474 to 493 (SKKERQEPYNYRPENHFDYF) the composition is skewed to basic and acidic residues.

This sequence belongs to the protein kinase superfamily. Ser/Thr protein kinase family.

The enzyme catalyses L-seryl-[protein] + ATP = O-phospho-L-seryl-[protein] + ADP + H(+). The catalysed reaction is L-threonyl-[protein] + ATP = O-phospho-L-threonyl-[protein] + ADP + H(+). In terms of biological role, serine/threonine-protein kinase involved in the regulation of auxin signaling. This chain is Protein kinase PINOID 2 (PID2), found in Oryza sativa subsp. japonica (Rice).